The following is a 493-amino-acid chain: UDP-N-acetylmuramoylalanine--D-glutamate ligase (493 aa).

Gly-126–Thr-132 contributes to the ATP binding site.

Belongs to the MurCDEF family.

It is found in the cytoplasm. The enzyme catalyses UDP-N-acetyl-alpha-D-muramoyl-L-alanine + D-glutamate + ATP = UDP-N-acetyl-alpha-D-muramoyl-L-alanyl-D-glutamate + ADP + phosphate + H(+). The protein operates within cell wall biogenesis; peptidoglycan biosynthesis. Cell wall formation. Catalyzes the addition of glutamate to the nucleotide precursor UDP-N-acetylmuramoyl-L-alanine (UMA). The chain is UDP-N-acetylmuramoylalanine--D-glutamate ligase from Mycolicibacterium smegmatis (strain ATCC 700084 / mc(2)155) (Mycobacterium smegmatis).